The sequence spans 272 residues: Phosphate import ATP-binding protein PstB (272 aa).

The 242-residue stretch at leucine 26–isoleucine 267 folds into the ABC transporter domain. Glycine 58–serine 65 is an ATP binding site.

Belongs to the ABC transporter superfamily. Phosphate importer (TC 3.A.1.7) family. The complex is composed of two ATP-binding proteins (PstB), two transmembrane proteins (PstC and PstA) and a solute-binding protein (PstS).

Its subcellular location is the cell inner membrane. The enzyme catalyses phosphate(out) + ATP + H2O = ADP + 2 phosphate(in) + H(+). Its function is as follows. Part of the ABC transporter complex PstSACB involved in phosphate import. Responsible for energy coupling to the transport system. This Shewanella denitrificans (strain OS217 / ATCC BAA-1090 / DSM 15013) protein is Phosphate import ATP-binding protein PstB.